The chain runs to 449 residues: MREVISIHVGQGGIQVGNACWELFCLEHGIQPDGQMPSDKTIGGGDDAFNTFFSETGAGKHVPRAVFLDLEPTVIDEVRTGTYRQLFHPEQLISGKEDAANNFARGHYTIGKEIVDLCLDRIRKLADNCTGLQGFLVFNSVGGGTGSGLGSLLLERLSVDYGKKSKLGFTIYPSPQVSTAVVEPYNSILSTHSLLEHTDVAVMLDNEAIYDICRRNLDIERPTYTNLNRLIAQVISSLTASLRFDGALNVDITEFQTNLVPYPRIHFMLSSYAPIISAEKAYHEQLSVAEITNSAFEPANMMAKCDPRHGKYMACSMMYRGDVVPKDVNASIATIKTKRTIQFVDWCPTGFKVGINYQPSTVVPGGDLAKVMRAVCMISNSTAIAEVFSRLDHKFDLMYAKRAFVHWYVGEGMEEGEFSEAREDLAALEKDYEEVGIETAEGEGEEEGY.

Gln-11 lines the GTP pocket. The residue at position 40 (Lys-40) is an N6-acetyllysine. GTP is bound by residues Glu-71, Ser-140, Gly-144, Thr-145, Thr-179, Asn-206, and Asn-228. Glu-71 contributes to the Mg(2+) binding site. The active site involves Glu-254.

It belongs to the tubulin family. In terms of assembly, dimer of alpha and beta chains. A typical microtubule is a hollow water-filled tube with an outer diameter of 25 nm and an inner diameter of 15 nM. Alpha-beta heterodimers associate head-to-tail to form protofilaments running lengthwise along the microtubule wall with the beta-tubulin subunit facing the microtubule plus end conferring a structural polarity. Microtubules usually have 13 protofilaments but different protofilament numbers can be found in some organisms and specialized cells. Requires Mg(2+) as cofactor. Post-translationally, undergoes a tyrosination/detyrosination cycle, the cyclic removal and re-addition of a C-terminal tyrosine residue by the enzymes tubulin tyrosine carboxypeptidase (TTCP) and tubulin tyrosine ligase (TTL), respectively. Acetylation of alpha chains at Lys-40 stabilizes microtubules and affects affinity and processivity of microtubule motors. This modification has a role in multiple cellular functions, ranging from cell motility, cell cycle progression or cell differentiation to intracellular trafficking and signaling.

It is found in the cytoplasm. It localises to the cytoskeleton. The catalysed reaction is GTP + H2O = GDP + phosphate + H(+). Tubulin is the major constituent of microtubules, a cylinder consisting of laterally associated linear protofilaments composed of alpha- and beta-tubulin heterodimers. Microtubules grow by the addition of GTP-tubulin dimers to the microtubule end, where a stabilizing cap forms. Below the cap, tubulin dimers are in GDP-bound state, owing to GTPase activity of alpha-tubulin. This is Tubulin alpha chain from Tetrahymena pyriformis.